A 628-amino-acid chain; its full sequence is Probable potassium transport system protein Kup (628 aa).

Transmembrane regions (helical) follow at residues 15 to 35 (FAAEIGALGVVFGDIGTSPLY), 49 to 69 (FLGGDVLGLLSLITWSIILSV), 106 to 126 (WYLLAAGLLGAAMLIGDGVLT), 141 to 161 (ISPELEHWVVTLTVLVLLAVF), 174 to 194 (FFGPIMLMWFGSLGALGVYGI), 210 to 230 (IMLMVNHPGLAGVILGACFLA), 254 to 274 (LFVAMPALLLNYFGQGAILLV), 295 to 315 (LLFLATAATVIASQSIITGVF), 343 to 363 (IYVGRLNWLLMIACIAVVLGF), 369 to 389 (LASAYGIAVAFAMVTTSILFI), 398 to 418 (WPAPAVWAMATGLLTIDFAFA), and 425 to 445 (IHDGGWLPLSIAAAIIFVMVS).

The protein belongs to the HAK/KUP transporter (TC 2.A.72) family.

The protein localises to the cell inner membrane. The enzyme catalyses K(+)(in) + H(+)(in) = K(+)(out) + H(+)(out). In terms of biological role, transport of potassium into the cell. Likely operates as a K(+):H(+) symporter. The chain is Probable potassium transport system protein Kup from Xanthobacter autotrophicus (strain ATCC BAA-1158 / Py2).